A 156-amino-acid polypeptide reads, in one-letter code: MKEKRDLKIQAIENGTVIDHITAGQALNVLRILRISSAFRATVSFVMNAPGARGKKDVVKIEGKELSVEELNRIALISPKATINIIRDFEVVQKNKVVLPSYVEGVVRCMNSNCISNSSEPIKSKFSVLRTEEEGVSLHCLYCEHVISEEIAENLL.

Zn(2+)-binding residues include cysteine 109, cysteine 114, cysteine 140, and cysteine 143.

The protein belongs to the PyrI family. In terms of assembly, contains catalytic and regulatory chains. It depends on Zn(2+) as a cofactor.

Involved in allosteric regulation of aspartate carbamoyltransferase. The protein is Aspartate carbamoyltransferase regulatory chain of Methanosarcina acetivorans (strain ATCC 35395 / DSM 2834 / JCM 12185 / C2A).